The primary structure comprises 422 residues: MQCSFLTIFIFITTVTVGVAEFSEQYQGSSSRLTRHLLEKHNKCSPPDGRVDISHNIELVHIIGINELNQNMQVLVYIVQQWTDASLSWKVEEFRGIKHTWLPEHSIWIPDIIVFNTLEHKMLLEAVRSPIKVSYTGEVTYAYPAIYTVLCQIGIATFPFDDQVCKIRFASWAYDEDKILLNASHKPLLKNYSPNEEWALQDVDMARKEYEHEETVVSEIIYYIKVARKPFYYLISLVVPSYIICVLSIAGLFARFSTKHERQERFTLGVTAILSMAVLSLVVTEKVPHSSENVPLLIVYMHFIIVMVTIATILTSTVMRVHAKGFRTHFLSPPNWIRKVLLIARKHANFFQQHGKVYMDIHTTAEQWGEVSRRMDYLLASVFIIIISTPTLYLFYMCFQMDHATAERVLLENAKRRDQLYY.

Residues M1 to A20 form the signal peptide. The Extracellular segment spans residues E21–Y233. C151 and C165 are joined by a disulfide. 3 helical membrane-spanning segments follow: residues L234–A254, L268–P288, and V294–L314. The Cytoplasmic portion of the chain corresponds to T315–L378. Residues L379 to F399 form a helical membrane-spanning segment.

Belongs to the ligand-gated ion channel (TC 1.A.9) family. Acetylcholine receptor (TC 1.A.9.1) subfamily. As to quaternary structure, the functional channel is a hetero-oligomer of pbo-5 and pbo-6. In terms of tissue distribution, expressed in the posterior body muscles.

Its subcellular location is the membrane. Functionally, forms a proton-gated ion channel with pbo-5 that is activated by acidification of the posterior coelomic space, leading to posterior body wall muscle contraction (pBoc) during the defecation cycle. Not necessary for stimulation of posterior body contraction (pBoc). Does not bind neurotransmitters such as acetylcholine, gamma-aminobutyric acid, glycine, serotonin, glutamate or choline. The sequence is that of Proton-gated ion channel subunit pbo-6 from Caenorhabditis elegans.